The chain runs to 331 residues: Probable allantoicase (331 aa).

It belongs to the allantoicase family.

It carries out the reaction allantoate + H2O = (S)-ureidoglycolate + urea. It participates in nitrogen metabolism; (S)-allantoin degradation; (S)-ureidoglycolate from allantoate (aminidohydrolase route): step 1/1. The polypeptide is Probable allantoicase (Pseudomonas syringae pv. syringae (strain B728a)).